A 355-amino-acid chain; its full sequence is UDP-galactose translocator 1 (355 aa).

The interval 1 to 36 is disordered; the sequence is MKFQNVHISHQDEDKEKLLPNDKDVEKADESPSSSR. Residues 9–30 show a composition bias toward basic and acidic residues; sequence SHQDEDKEKLLPNDKDVEKADE. Helical transmembrane passes span 40 to 60, 177 to 197, 211 to 231, 282 to 302, 309 to 329, and 330 to 350; these read VFKCYVIASMTFIWTAYTLTI, WMAITLLMFGVAFVQMNNVSA, IVGLSAVLATCVTAGFAGVYF, VWAVVILLGVGGLYISLVMRY, SMASAVSIILVVVLSMLIFPD, and IFIGMYFVLGTICVVLAVLLY.

It belongs to the nucleotide-sugar transporter family. SLC35A subfamily.

The protein resides in the membrane. The protein localises to the cytoplasmic granule membrane. This chain is UDP-galactose translocator 1 (ugtp-1), found in Caenorhabditis elegans.